The primary structure comprises 571 residues: Proline--tRNA ligase (571 aa).

Belongs to the class-II aminoacyl-tRNA synthetase family. ProS type 1 subfamily. As to quaternary structure, homodimer.

It is found in the cytoplasm. It carries out the reaction tRNA(Pro) + L-proline + ATP = L-prolyl-tRNA(Pro) + AMP + diphosphate. In terms of biological role, catalyzes the attachment of proline to tRNA(Pro) in a two-step reaction: proline is first activated by ATP to form Pro-AMP and then transferred to the acceptor end of tRNA(Pro). As ProRS can inadvertently accommodate and process non-cognate amino acids such as alanine and cysteine, to avoid such errors it has two additional distinct editing activities against alanine. One activity is designated as 'pretransfer' editing and involves the tRNA(Pro)-independent hydrolysis of activated Ala-AMP. The other activity is designated 'posttransfer' editing and involves deacylation of mischarged Ala-tRNA(Pro). The misacylated Cys-tRNA(Pro) is not edited by ProRS. The protein is Proline--tRNA ligase of Vibrio parahaemolyticus serotype O3:K6 (strain RIMD 2210633).